Reading from the N-terminus, the 206-residue chain is Protein GET1 (206 aa).

Over 1 to 4 (MPSL) the chain is Lumenal. Residues 5–24 (LITVLFLNVIIYVINTVGAA) traverse the membrane as a helical segment. Residues 25–110 (TVDGLLWLLY…TFDMTIKIAR (86 aa)) lie on the Cytoplasmic side of the membrane. The stretch at 75-100 (AKLRRRHDKAMEAYEAKNNELTQSKS) forms a coiled coil. A helical transmembrane segment spans residues 111 to 131 (WAATSGLMLFLQFWYSKTPIF). Topologically, residues 132-155 (TLPPGWIPWQVQWVLSFPRAPMGT) are lumenal. Residues 156 to 172 (VSIQIWGGACATVVALV) traverse the membrane as a helical segment. The Cytoplasmic portion of the chain corresponds to 173–206 (GDAMRASLAYVSKPKIDRIKLGATMEGKEGKKRQ).

The protein belongs to the WRB/GET1 family. As to quaternary structure, interacts with GET3.

The protein resides in the endoplasmic reticulum membrane. Its function is as follows. Required for the post-translational delivery of tail-anchored (TA) proteins to the endoplasmic reticulum. Acts as a membrane receptor for soluble GET3, which recognizes and selectively binds the transmembrane domain of TA proteins in the cytosol. This chain is Protein GET1, found in Ajellomyces capsulatus (strain NAm1 / WU24) (Darling's disease fungus).